Consider the following 595-residue polypeptide: Arginine--tRNA ligase (595 aa).

A 'HIGH' region motif is present at residues Ala-132–His-142.

Belongs to the class-I aminoacyl-tRNA synthetase family. Monomer.

Its subcellular location is the cytoplasm. It carries out the reaction tRNA(Arg) + L-arginine + ATP = L-arginyl-tRNA(Arg) + AMP + diphosphate. The sequence is that of Arginine--tRNA ligase from Cupriavidus pinatubonensis (strain JMP 134 / LMG 1197) (Cupriavidus necator (strain JMP 134)).